A 162-amino-acid polypeptide reads, in one-letter code: Phosphopantetheine adenylyltransferase (162 aa).

Substrate is bound at residue Thr-14. ATP contacts are provided by residues 14–15 and His-22; that span reads TF. Substrate contacts are provided by Lys-46, Leu-78, and Arg-92. ATP-binding positions include 93 to 95, Glu-103, and 128 to 134; these read GLR and HSFISSS.

Belongs to the bacterial CoaD family. In terms of assembly, homohexamer. Requires Mg(2+) as cofactor.

It is found in the cytoplasm. The catalysed reaction is (R)-4'-phosphopantetheine + ATP + H(+) = 3'-dephospho-CoA + diphosphate. Its pathway is cofactor biosynthesis; coenzyme A biosynthesis; CoA from (R)-pantothenate: step 4/5. Functionally, reversibly transfers an adenylyl group from ATP to 4'-phosphopantetheine, yielding dephospho-CoA (dPCoA) and pyrophosphate. In Xylella fastidiosa (strain 9a5c), this protein is Phosphopantetheine adenylyltransferase.